The chain runs to 626 residues: Chaperone protein DnaK (626 aa).

Position 197 is a phosphothreonine; by autocatalysis (Thr197). The segment covering 598–612 (AQGEQGQAAQPQAET) has biased composition (low complexity). Residues 598 to 626 (AQGEQGQAAQPQAETQGDDVQDVEFEEVK) are disordered. Acidic residues predominate over residues 613 to 626 (QGDDVQDVEFEEVK).

Belongs to the heat shock protein 70 family.

Functionally, acts as a chaperone. The polypeptide is Chaperone protein DnaK (Flavobacterium psychrophilum (strain ATCC 49511 / DSM 21280 / CIP 103535 / JIP02/86)).